The sequence spans 175 residues: MSRVAKKPISIPKGVEVSVQSDMLTVKGVKGVLTFPKSDNVNVVMDGDILTLSANDPSHISLAGTVRAILSNMIKGVSIGFERKLELVGVGYRASMQGKDLNLTLGFSHPLVFVPPEGITLLTPSQTEVVVQGIDKQRVGEVAAKIRSFRPPEPYKGKGLKYAAEAIIRKEAKKA.

This sequence belongs to the universal ribosomal protein uL6 family. In terms of assembly, part of the 50S ribosomal subunit.

This protein binds to the 23S rRNA, and is important in its secondary structure. It is located near the subunit interface in the base of the L7/L12 stalk, and near the tRNA binding site of the peptidyltransferase center. The chain is Large ribosomal subunit protein uL6 from Xylella fastidiosa (strain M12).